The chain runs to 178 residues: Caveolin-1 (178 aa).

Position 2 is an N-acetylserine (Ser2). Ser2 is subject to Phosphoserine. A required for homooligomerization region spans residues 2–94 (SGGKYVDSEG…WKASFTTFTV (93 aa)). The Cytoplasmic segment spans residues 2–104 (SGGKYVDSEG…TKYWFYRLLS (103 aa)). Lys5 carries the post-translational modification N6-acetyllysine; alternate. A Glycyl lysine isopeptide (Lys-Gly) (interchain with G-Cter in ubiquitin); alternate cross-link involves residue Lys5. Position 6 is a phosphotyrosine (Tyr6). Position 9 is a phosphoserine (Ser9). Tyr14 is subject to Phosphotyrosine; by ABL1. Tyr25 is modified (phosphotyrosine). Glycyl lysine isopeptide (Lys-Gly) (interchain with G-Cter in ubiquitin) cross-links involve residues Lys26 and Lys30. At Ser37 the chain carries Phosphoserine. Residues Lys39, Lys47, and Lys57 each participate in a glycyl lysine isopeptide (Lys-Gly) (interchain with G-Cter in ubiquitin) cross-link. Positions 82-94 (DGIWKASFTTFTV) are interaction with CAVIN3. Positions 105 to 125 (ALFGIPMALIWGIYFAILSFL) form an intramembrane region, helical. Topologically, residues 126 to 178 (HIWAVVPCIKSFLIEIQCISRVYSIYVHTFCDPFFEAVGKIFSNIRINMQKET) are cytoplasmic. The interacts with SPRY1, SPRY2, SPRY3 and SPRY4 stretch occupies residues 131 to 142 (VPCIKSFLIEIQ). S-palmitoyl cysteine attachment occurs at residues Cys133, Cys143, and Cys156. Residues 149–160 (SIYVHTFCDPFF) are interacts with SPRY1, SPRY2, and SPRY4. Residues 167–178 (FSNIRINMQKET) form an interacts with SPRY1, SPRY2, SPRY3 and SPRY4 region.

It belongs to the caveolin family. Homooligomer. Interacts with BMX, BTK, GLIPR2, NOSTRIN, SNAP25 and STX1A. Interacts with PACSIN2; this interaction induces membrane tubulation. Interacts (via the N-terminus) with DPP4; the interaction is direct. Interacts with SLC7A9. Interacts with CTNNB1, CDH1 and JUP. Interacts with TGFBR1. Interacts with CAVIN3 (via leucine-zipper domain) in a cholesterol-sensitive manner. Interacts with CAVIN1. Interacts with EHD2 in a cholesterol-dependent manner. Forms a ternary complex with UBXN6 and VCP; mediates CAV1 targeting to lysosomes for degradation. Interacts with ABCG1; this interaction regulates ABCG1-mediated cholesterol efflux. Interacts with NEU3; this interaction enhances NEU3 sialidase activity within caveola. Interacts (via C-terminus) with SPRY1, SPRY2 (via C-terminus), SPRY3, and SPRY4. Interacts with IGFBP5; this interaction allows trafficking of IGFBP5 from the plasma membrane to the nucleus. In terms of processing, phosphorylation of isoform Beta on serine residues is constitutive. Phosphorylated at Tyr-14 by ABL1 in response to oxidative stress. Post-translationally, ubiquitinated. Undergo monoubiquitination and multi- and/or polyubiquitination. Monoubiquitination of N-terminal lysines promotes integration in a ternary complex with UBXN6 and VCP which promotes oligomeric CAV1 targeting to lysosomes for degradation. Ubiquitinated by ZNRF1; leading to degradation and modulation of the TLR4-mediated immune response.

Its subcellular location is the golgi apparatus membrane. The protein resides in the cell membrane. The protein localises to the membrane. It is found in the caveola. It localises to the membrane raft. Its subcellular location is the golgi apparatus. The protein resides in the trans-Golgi network. In terms of biological role, may act as a scaffolding protein within caveolar membranes. Forms a stable heterooligomeric complex with CAV2 that targets to lipid rafts and drives caveolae formation. Mediates the recruitment of CAVIN proteins (CAVIN1/2/3/4) to the caveolae. Interacts directly with G-protein alpha subunits and can functionally regulate their activity. Involved in the costimulatory signal essential for T-cell receptor (TCR)-mediated T-cell activation. Its binding to DPP4 induces T-cell proliferation and NF-kappa-B activation in a T-cell receptor/CD3-dependent manner. Recruits CTNNB1 to caveolar membranes and may regulate CTNNB1-mediated signaling through the Wnt pathway. Negatively regulates TGFB1-mediated activation of SMAD2/3 by mediating the internalization of TGFBR1 from membrane rafts leading to its subsequent degradation. Binds 20(S)-hydroxycholesterol (20(S)-OHC). The protein is Caveolin-1 (CAV1) of Canis lupus familiaris (Dog).